Reading from the N-terminus, the 315-residue chain is Acetyl-coenzyme A carboxylase carboxyl transferase subunit beta, chloroplastic (315 aa).

The 269-residue stretch at 47-315 (LWTRCDSCEN…VYKESNSYLF (269 aa)) folds into the CoA carboxyltransferase N-terminal domain. Zn(2+)-binding residues include C51, C54, C70, and C73. Residues 51-73 (CDSCENMLYVRFLKQNKRICEEC) form a C4-type zinc finger.

It belongs to the AccD/PCCB family. In terms of assembly, acetyl-CoA carboxylase is a heterohexamer composed of biotin carboxyl carrier protein, biotin carboxylase and 2 subunits each of ACCase subunit alpha and ACCase plastid-coded subunit beta (accD). The cofactor is Zn(2+).

The protein localises to the plastid. It localises to the chloroplast stroma. The catalysed reaction is N(6)-carboxybiotinyl-L-lysyl-[protein] + acetyl-CoA = N(6)-biotinyl-L-lysyl-[protein] + malonyl-CoA. The protein operates within lipid metabolism; malonyl-CoA biosynthesis; malonyl-CoA from acetyl-CoA: step 1/1. Component of the acetyl coenzyme A carboxylase (ACC) complex. Biotin carboxylase (BC) catalyzes the carboxylation of biotin on its carrier protein (BCCP) and then the CO(2) group is transferred by the transcarboxylase to acetyl-CoA to form malonyl-CoA. The polypeptide is Acetyl-coenzyme A carboxylase carboxyl transferase subunit beta, chloroplastic (Physcomitrium patens (Spreading-leaved earth moss)).